The primary structure comprises 640 residues: 1-deoxy-D-xylulose-5-phosphate synthase (640 aa).

Thiamine diphosphate-binding positions include H79 and 120–122; that span reads GHS. D151 is a binding site for Mg(2+). Thiamine diphosphate is bound by residues 152 to 153, N180, Y290, and E372; that span reads GS. N180 is a binding site for Mg(2+).

The protein belongs to the transketolase family. DXPS subfamily. Homodimer. The cofactor is Mg(2+). It depends on thiamine diphosphate as a cofactor.

It carries out the reaction D-glyceraldehyde 3-phosphate + pyruvate + H(+) = 1-deoxy-D-xylulose 5-phosphate + CO2. It functions in the pathway metabolic intermediate biosynthesis; 1-deoxy-D-xylulose 5-phosphate biosynthesis; 1-deoxy-D-xylulose 5-phosphate from D-glyceraldehyde 3-phosphate and pyruvate: step 1/1. Catalyzes the acyloin condensation reaction between C atoms 2 and 3 of pyruvate and glyceraldehyde 3-phosphate to yield 1-deoxy-D-xylulose-5-phosphate (DXP). In Rhodopseudomonas palustris (strain BisA53), this protein is 1-deoxy-D-xylulose-5-phosphate synthase.